Reading from the N-terminus, the 229-residue chain is V-type proton ATPase subunit E (229 aa).

It belongs to the V-ATPase E subunit family. V-ATPase is a heteromultimeric enzyme composed of a peripheral catalytic V1 complex (components A to H) attached to an integral membrane V0 proton pore complex (components: a, c, c', c'' and d).

Its function is as follows. Subunit of the peripheral V1 complex of vacuolar ATPase essential for assembly or catalytic function. V-ATPase is responsible for acidifying a variety of intracellular compartments in eukaryotic cells. This is V-type proton ATPase subunit E (VATE) from Spinacia oleracea (Spinach).